We begin with the raw amino-acid sequence, 1074 residues long: MSLKSETRVNTSTLQKIAADMSNLIENLDTRELHFEGEEVEYDASPGDPKAQEGCIPFSSIYNTQGFKEPNIQTYLSGCPIKAQVLEVERFTSTSRVPSINLYTIELTHGEFTWQVKRKFKHFQEFHRELLKYKAFIRIPIPTKRHTFRRQNVKEEPREMPSLPRSSENAIQEEQFFGRRKQLEDYLTKILKMPMYRNYHATTEFLDVSQLSFIHDLGPKGLEGMIMKRSGGHRIPGVNCCGHGRACYRWSKRWLIVKDSFLLYMKPDSGAIAFVLLVDKEFRVKVGRKETETKYGLRIDNLSRTLILKCNSYRHARWWGGAIEEFIRKHGADFLKDHRFGSYAALHENTLAKWYVNAKGYFEDIANAMEEASEEIFITDWWLSPEIFLKRPVVEGNRWRLDCILKRKAQQGVRIFIMLYKEVELALGINSEYSKRTLMRLHPNIKVMRHPDHVSSSVYLWAHHEKLVIIDQSVAFVGGIDLAYGRWDDNEHRLTDVGSVKRVTSGLSLGSLTAASVESMESLSLKDKHEFHKKEPISKIVDETDMKLKGIGKSRKFSKFSLYRQLHRHHLHNADSISSIDSTSSYFSHCRSHQNLIHGLKPHLKLFHPSSESEQGLTRHSTDTGSIRSVQTGVGELHGETRFWHGKDYCNFVFKDWVQLDKPFADFIDRYSTPRMPWHDIGSVVHGKAARDVARHFIQRWNFTKIMKPKYRSLSYPFLLPKSQATAHELRYQVPGAVPAKVQLLRSAADWSAGIKHHEESIHAAYIHVIENSKHYIYIENQFFISCADDKVVFNKVGDRIAQRILKAHREGQRYRVYIVIPLLPGFEGDISTGGGNALQAIMHFNYRTMCRGESSILEQLKPELGNKWINYISFCGLRTHAELEGNLVTELIYVHSKLLIADDNTVIIGSANINDRSMLGKRDSEMAVIVQDTETVPSVMDGKEYQAGRFARDLRLECFRLVLGYLSDPSEDLQDPVSDKFFKEIWVSTAARNATIYDKVFRCLPNDEVHNLIQLRDFINKPILAKEDALRAEEELRKIRGFLVQFPLYFLSEENLLPSVGTKEAIVPMEVWT.

A PX domain is found at 81 to 212 (IKAQVLEVER…TEFLDVSQLS (132 aa)). Residues 219–328 (PKGLEGMIMK…WGGAIEEFIR (110 aa)) enclose the PH domain. Residues cysteine 240 and cysteine 241 are each lipidated (S-palmitoyl cysteine). Residues 459–486 (YLWAHHEKLVIIDQSVAFVGGIDLAYGR) enclose the PLD phosphodiesterase 1 domain. The catalytic stretch occupies residues 463–928 (HHEKLVIIDQ…MLGKRDSEMA (466 aa)). 3 positions are modified to phosphoserine: serine 499, serine 561, and serine 629. The PLD phosphodiesterase 2 domain maps to 891–918 (ELIYVHSKLLIADDNTVIIGSANINDRS).

It belongs to the phospholipase D family. Interacts with PIP5K1B. In terms of tissue distribution, expressed in kidney, lung, and at a much lower levels, in brain, liver, heart, testis and spleen.

The protein resides in the cytoplasm. The protein localises to the perinuclear region. It localises to the endoplasmic reticulum membrane. Its subcellular location is the golgi apparatus membrane. It is found in the late endosome membrane. The catalysed reaction is a 1,2-diacyl-sn-glycero-3-phosphocholine + H2O = a 1,2-diacyl-sn-glycero-3-phosphate + choline + H(+). It catalyses the reaction ethanol + a 1,2-diacyl-sn-glycero-3-phosphocholine = 1,2-diacyl-sn-glycero-3-phosphoethanol + choline. The enzyme catalyses 1,2-dihexadecanoyl-sn-glycero-3-phosphocholine + H2O = 1,2-dihexadecanoyl-sn-glycero-3-phosphate + choline + H(+). With respect to regulation, stimulated by phosphatidylinositol 4,5-bisphosphate and phosphatidylinositol 3,4,5-trisphosphate, activated by the phosphokinase C-alpha, by the ADP-ribosylation factor-1 (ARF-1), and to a lesser extent by GTP-binding proteins: RHO A, RAC-1 and CDC42. Inhibited by oleate. Functionally, function as phospholipase selectivefor phosphatidylcholine. Implicated as a critical step in numerous cellular pathways, including signal transduction, membrane trafficking, and the regulation of mitosis. May be involved in the regulation of perinuclear intravesicular membrane traffic. This Mus musculus (Mouse) protein is Phospholipase D1.